Consider the following 287-residue polypeptide: Gliotoxin thiomethyltransferase GtmA (287 aa).

2 residues coordinate S-adenosyl-L-methionine: Thr27 and Ala54. A disulfide bridge links Cys55 with Cys80. S-adenosyl-L-methionine contacts are provided by Asp82, Met87, Asn109, Ala110, Ala126, and Arg248.

This sequence belongs to the class I-like SAM-binding methyltransferase superfamily.

Its subcellular location is the cytoplasm. It carries out the reaction a thiol + S-adenosyl-L-methionine = a methyl thioether + S-adenosyl-L-homocysteine + H(+). Functionally, S-methyltransferase that catalyzes the irreversible conversion of the secondary metabolite gliotoxin to bis(methylthio)gliotoxin (BmGT). Gliotoxin, a member of the epipolythiodioxopiperazine (ETP) class of toxins, is characterized by a disulfide bridged cyclic dipeptide. Its thiol groups are essential for bioactivity, as they conjugate to sulfur-containing proteins, disturb the intracellular redox equilibrium, and generate reactive oxygen species by cycling between reduced and oxidized states. The enzyme prevents self-intoxication of the fungus by irreversible conversion of the toxic gliotoxin to a biologically inactive bis-thiomethylated derivative. Appears to negatively regulate gliotoxin biosynthesis. This chain is Gliotoxin thiomethyltransferase GtmA, found in Aspergillus fumigatus (strain ATCC MYA-4609 / CBS 101355 / FGSC A1100 / Af293) (Neosartorya fumigata).